The sequence spans 1226 residues: 3-hydroxy-3-methylglutaryl-coenzyme A reductase (1226 aa).

Helical transmembrane passes span 17-37 (IETI…ILSG), 224-244 (ILVV…LFLA), 252-272 (FWLS…TLPM), 337-357 (VGNM…VGVN), and 373-393 (LLAM…TIMV). One can recognise an SSD domain in the interval 223–391 (DILVVLTGYI…FTLYTAVLTI (169 aa)). The disordered stretch occupies residues 428–449 (LSRKSSKQSVTEPETTKNLRQR). The span at 434-445 (KQSVTEPETTKN) shows a compositional bias: polar residues. Residues 481–501 (LLLIASFLTLHILNFCTTLTS) traverse the membrane as a helical segment. Disordered regions lie at residues 683–702 (APAP…PPPL) and 722–742 (LPIR…EVEP). The span at 685–702 (APAPAPEPEPPVNRPPPL) shows a compositional bias: pro residues. E869 (charge relay system) is an active-site residue. 875 to 881 (STSRGCK) provides a ligand contact to CoA. NADP(+) is bound by residues 936 to 938 (SRF) and 963 to 971 (DAMGMNMIS). The Charge relay system role is filled by K1001. A CoA-binding site is contributed by 1030–1032 (VLK). D1077 serves as the catalytic Charge relay system. Residues 1150–1170 (IIASAVMAGELSLISALAAGH) traverse the membrane as a helical segment. CoA is bound at residue 1174 to 1175 (AH). The active-site Proton donor is the H1175. 1179–1180 (NR) contributes to the NADP(+) binding site. Residues 1182–1226 (QLNTPMPSRPHTPGPEDVSHVQQLPTPSASDDKGVTAQGYVVEAK) form a disordered region. Over residues 1201–1210 (HVQQLPTPSA) the composition is skewed to polar residues.

This sequence belongs to the HMG-CoA reductase family.

It localises to the endoplasmic reticulum membrane. It carries out the reaction (R)-mevalonate + 2 NADP(+) + CoA = (3S)-3-hydroxy-3-methylglutaryl-CoA + 2 NADPH + 2 H(+). The protein operates within metabolic intermediate biosynthesis; (R)-mevalonate biosynthesis; (R)-mevalonate from acetyl-CoA: step 3/3. Functionally, HMG-CoA reductase; part of the first module of ergosterol biosynthesis pathway that includes the early steps of the pathway, conserved across all eukaryotes, and which results in the formation of mevalonate from acetyl-coenzyme A (acetyl-CoA). This module also plays a key role in the biosynthesis of triterpenes such as ganoderic acids (GA), a group of highly oxygenated lanostane-type triterpenoids which are well recognized as a main group of unique bioactive compounds in the medicinal mushroom Ganoderma lucidum. In this module, the acetyl-CoA acetyltransferase catalyzes the formation of acetoacetyl-CoA. The hydroxymethylglutaryl-CoA synthase HMGS then condenses acetyl-CoA with acetoacetyl-CoA to form HMG-CoA. The rate-limiting step of the early module is the reduction to mevalonate by the 3-hydroxy-3-methylglutaryl-coenzyme A (HMG-CoA) reductase. The sequence is that of 3-hydroxy-3-methylglutaryl-coenzyme A reductase from Ganoderma lucidum (Ling zhi medicinal fungus).